The primary structure comprises 320 residues: D-alanine--D-alanine ligase (320 aa).

An ATP-grasp domain is found at 120–314 (SSWFFANSIN…FTNLIAEIIK (195 aa)). 147 to 198 (MKRPYVIKPLTQGSSIGVEVIFEEDDFNFADYDFPYGDQVVIERYIKGREFQ) serves as a coordination point for ATP. Mg(2+) is bound by residues Glu-267, Glu-281, and Asn-283.

Belongs to the D-alanine--D-alanine ligase family. Mg(2+) serves as cofactor. Requires Mn(2+) as cofactor.

The protein resides in the cytoplasm. The catalysed reaction is 2 D-alanine + ATP = D-alanyl-D-alanine + ADP + phosphate + H(+). It functions in the pathway cell wall biogenesis; peptidoglycan biosynthesis. Its function is as follows. Cell wall formation. The protein is D-alanine--D-alanine ligase of Rickettsia akari (strain Hartford).